The chain runs to 361 residues: Peptide chain release factor 1 (361 aa).

N5-methylglutamine is present on Gln237. The span at 287–297 (KQQKEQSDTRK) shows a compositional bias: basic and acidic residues. A disordered region spans residues 287-313 (KQQKEQSDTRKSLVGSGDRSERIRTYN).

Belongs to the prokaryotic/mitochondrial release factor family. Methylated by PrmC. Methylation increases the termination efficiency of RF1.

It localises to the cytoplasm. In terms of biological role, peptide chain release factor 1 directs the termination of translation in response to the peptide chain termination codons UAG and UAA. This is Peptide chain release factor 1 from Francisella tularensis subsp. novicida (strain U112).